A 164-amino-acid polypeptide reads, in one-letter code: CDP-archaeol synthase (164 aa).

The next 4 helical transmembrane spans lie at 3–23, 51–71, 77–97, and 122–142; these read LLYF…AVLA, YEGF…PNLL, LLDA…GAFI, and LAVY…AVII.

Belongs to the CDP-archaeol synthase family. Mg(2+) serves as cofactor.

The protein localises to the cell membrane. The enzyme catalyses 2,3-bis-O-(geranylgeranyl)-sn-glycerol 1-phosphate + CTP + H(+) = CDP-2,3-bis-O-(geranylgeranyl)-sn-glycerol + diphosphate. It functions in the pathway membrane lipid metabolism; glycerophospholipid metabolism. Its function is as follows. Catalyzes the formation of CDP-2,3-bis-(O-geranylgeranyl)-sn-glycerol (CDP-archaeol) from 2,3-bis-(O-geranylgeranyl)-sn-glycerol 1-phosphate (DGGGP) and CTP. This reaction is the third ether-bond-formation step in the biosynthesis of archaeal membrane lipids. The chain is CDP-archaeol synthase from Pyrobaculum islandicum (strain DSM 4184 / JCM 9189 / GEO3).